We begin with the raw amino-acid sequence, 292 residues long: Acetylglutamate kinase (292 aa).

Substrate contacts are provided by residues 64–65 (GG), R86, and N190.

Belongs to the acetylglutamate kinase family. ArgB subfamily.

The protein localises to the cytoplasm. It catalyses the reaction N-acetyl-L-glutamate + ATP = N-acetyl-L-glutamyl 5-phosphate + ADP. It participates in amino-acid biosynthesis; L-arginine biosynthesis; N(2)-acetyl-L-ornithine from L-glutamate: step 2/4. In terms of biological role, catalyzes the ATP-dependent phosphorylation of N-acetyl-L-glutamate. This is Acetylglutamate kinase from Geotalea daltonii (strain DSM 22248 / JCM 15807 / FRC-32) (Geobacter daltonii).